Reading from the N-terminus, the 376-residue chain is N-acetyldiaminopimelate deacetylase (376 aa).

Aspartate 69 is a catalytic residue. Residue glutamate 128 is the Proton acceptor of the active site.

The protein belongs to the peptidase M20A family. N-acetyldiaminopimelate deacetylase subfamily.

It catalyses the reaction N-acetyl-(2S,6S)-2,6-diaminopimelate + H2O = (2S,6S)-2,6-diaminopimelate + acetate. It participates in amino-acid biosynthesis; L-lysine biosynthesis via DAP pathway; LL-2,6-diaminopimelate from (S)-tetrahydrodipicolinate (acetylase route): step 3/3. Its function is as follows. Catalyzes the conversion of N-acetyl-diaminopimelate to diaminopimelate and acetate. This chain is N-acetyldiaminopimelate deacetylase, found in Bacillus cereus (strain AH820).